The chain runs to 194 residues: Thymidine kinase (194 aa).

ATP is bound by residues 9 to 16 and 85 to 88; these read GAMNSGKT and DECQ. Residue E86 is the Proton acceptor of the active site. Positions 143, 146, 180, and 183 each coordinate Zn(2+).

Belongs to the thymidine kinase family. As to quaternary structure, homotetramer.

Its subcellular location is the cytoplasm. The catalysed reaction is thymidine + ATP = dTMP + ADP + H(+). This Enterococcus faecalis (strain ATCC 700802 / V583) protein is Thymidine kinase.